Consider the following 644-residue polypeptide: Protein DA1-related 6 (644 aa).

UIM domains lie at 119–138 (EEDE…NNRR), 181–200 (DVDE…KGKG), and 244–263 (DEDE…KGQI). An LIM zinc-binding domain is found at 284-355 (SLCGGCNFAV…YVCKEKKMKT (72 aa)). Residues 572 to 589 (ASSSASSSSRTPPAASAS) are compositionally biased toward low complexity. Residues 572–591 (ASSSASSSSRTPPAASASKK) are disordered.

As to quaternary structure, interacts with ubiquitin.

Its function is as follows. Ubiquitin receptor that probably regulates developmental process. This Arabidopsis thaliana (Mouse-ear cress) protein is Protein DA1-related 6 (DAR6).